The chain runs to 150 residues: MKVIFLADVKGKGKKGEIKEMPTGYAQNFLIKKNLAKEATAQAIGELRGKQKSEEKAHAELVAEAQSIKAKLAEEATLVEFTEKVGPDGRTFGSITSKKIAEELQKQFGIKIDKRHIKVDSPIRSIGLIDVPVKIYQDIAGVIRLRVKEG.

Belongs to the bacterial ribosomal protein bL9 family.

In terms of biological role, binds to the 23S rRNA. The chain is Large ribosomal subunit protein bL9 from Streptococcus sanguinis (strain SK36).